The following is a 460-amino-acid chain: Elongation factor 1-alpha (460 aa).

Gly-2 carries the post-translational modification N,N,N-trimethylglycine. At Lys-3 the chain carries N6,N6-dimethyllysine; alternate. Position 3 is an N6-methyllysine; alternate (Lys-3). A tr-type G domain is found at 5–240; sequence KLHVNVVVIG…DAIEPPVRPS (236 aa). The segment at 14–21 is G1; sequence GHVDSGKS. GTP is bound at residue 14–21; it reads GHVDSGKS. Lys-30 carries the N6-methyllysine modification. The tract at residues 70-74 is G2; sequence GITID. Residue Lys-79 is modified to N6,N6,N6-trimethyllysine. The segment at 91–94 is G3; that stretch reads DAPG. GTP-binding positions include 91 to 95 and 153 to 156; these read DAPGH and NKMD. The G4 stretch occupies residues 153–156; the sequence is NKMD. The G5 stretch occupies residues 192–194; sequence SGW. An N6,N6-dimethyllysine; alternate modification is found at Lys-316. Lys-316 is subject to N6-methyllysine; alternate. At Lys-390 the chain carries N6-methyllysine.

Belongs to the TRAFAC class translation factor GTPase superfamily. Classic translation factor GTPase family. EF-Tu/EF-1A subfamily.

Its subcellular location is the cytoplasm. Functionally, this protein promotes the GTP-dependent binding of aminoacyl-tRNA to the A-site of ribosomes during protein biosynthesis. This chain is Elongation factor 1-alpha (TEF1), found in Schizophyllum commune (Split gill fungus).